The following is a 173-amino-acid chain: Alpha-crystallin A chain (173 aa).

Met1 is modified (N-acetylmethionine). The required for complex formation with BFSP1 and BFSP2 stretch occupies residues 1 to 63; sequence MDVTIQHPWF…RTVLDSGISE (63 aa). Gln6 is subject to Deamidated glutamine; partial. Ser45 bears the Phosphoserine mark. Gln50 carries the deamidated glutamine; partial modification. The sHSP domain maps to 52-162; sequence LFRTVLDSGI…GHSERAIPVS (111 aa). Lys99 is modified (N6-acetyllysine). Position 100 (His100) interacts with Zn(2+). Residue Asn101 is modified to Deamidated asparagine; partial. Glu102 and His107 together coordinate Zn(2+). Position 122 is a phosphoserine (Ser122). A Deamidated asparagine; partial modification is found at Asn123. A disulfide bridge connects residues Cys131 and Cys142. The disordered stretch occupies residues 146–173; the sequence is VQSSMDDGHSERAIPVSREEKPSSVPSS. Deamidated glutamine; partial is present on Gln147. Basic and acidic residues predominate over residues 151–167; the sequence is DDGHSERAIPVSREEKP. Residue His154 participates in Zn(2+) binding. O-linked (GlcNAc) serine glycosylation occurs at Ser162.

It belongs to the small heat shock protein (HSP20) family. Heteromer composed of three CRYAA and one CRYAB subunits. Inter-subunit bridging via zinc ions enhances stability, which is crucial as there is no protein turn over in the lens. Can also form homodimers and homotetramers (dimers of dimers) which serve as the building blocks of homooligomers. Within homooligomers, the zinc-binding motif is created from residues of 3 different molecules. His-100 and Glu-102 from one molecule are ligands of the zinc ion, and His-107 and His-154 residues from additional molecules complete the site with tetrahedral coordination geometry. Part of a complex required for lens intermediate filament formation composed of BFSP1, BFSP2 and CRYAA. Post-translationally, undergoes age-dependent proteolytical cleavage at the C-terminus.

The protein resides in the cytoplasm. It is found in the nucleus. Functionally, contributes to the transparency and refractive index of the lens. In its oxidized form (absence of intramolecular disulfide bond), acts as a chaperone, preventing aggregation of various proteins under a wide range of stress conditions. Required for the correct formation of lens intermediate filaments as part of a complex composed of BFSP1, BFSP2 and CRYAA. The chain is Alpha-crystallin A chain (CRYAA) from Orycteropus afer (Aardvark).